The following is a 475-amino-acid chain: Cytosolic non-specific dipeptidase (475 aa).

Alanine 2 carries the N-acetylalanine modification. Lysine 9 carries the post-translational modification N6-acetyllysine. Serine 58 carries the post-translational modification Phosphoserine. Histidine 99 contacts Mn(2+). Residue aspartate 101 is part of the active site. Residue aspartate 132 participates in Mn(2+) binding. Residue glutamate 166 is the Proton acceptor of the active site. Substrate-binding positions include 166 to 167 (EE), aspartate 195, and histidine 228. Mn(2+) is bound by residues glutamate 167 and aspartate 195. Position 299 is a phosphoserine (serine 299). Threonine 330, arginine 343, serine 417, and histidine 445 together coordinate substrate. Histidine 445 provides a ligand contact to Mn(2+).

It belongs to the peptidase M20A family. Homodimer. The cofactor is Mn(2+).

Its subcellular location is the cytoplasm. The enzyme catalyses Hydrolysis of dipeptides, preferentially hydrophobic dipeptides including prolyl amino acids.. It catalyses the reaction L-threonyl-L-threonine + H2O = 2 L-threonine. It carries out the reaction L-threonyl-L-serine + H2O = L-threonine + L-serine. The catalysed reaction is L-seryl-L-threonine + H2O = L-threonine + L-serine. The enzyme catalyses L-cysteinylglycine + H2O = L-cysteine + glycine. It catalyses the reaction (S)-lactate + L-phenylalanine = N-[(S)-lactoyl]-L-phenylalanine + H2O. In terms of biological role, catalyzes the peptide bond hydrolysis in dipeptides, displaying a non-redundant activity toward threonyl dipeptides. Mediates threonyl dipeptide catabolism in a tissue-specific way. Has high dipeptidase activity toward cysteinylglycine, an intermediate metabolite in glutathione metabolism. Metabolizes N-lactoyl-amino acids, both through hydrolysis to form lactic acid and amino acids, as well as through their formation by reverse proteolysis. Plays a role in the regulation of cell cycle arrest and apoptosis. This Pongo abelii (Sumatran orangutan) protein is Cytosolic non-specific dipeptidase (CNDP2).